The chain runs to 244 residues: Phosphonates import ATP-binding protein PhnC 2 (244 aa).

Residues 6–244 form the ABC transporter domain; sequence IECHNLETAY…LQAQFVVNNQ (239 aa). 41–48 lines the ATP pocket; that stretch reads GLNGAGKS.

It belongs to the ABC transporter superfamily. Phosphonates importer (TC 3.A.1.9.1) family. The complex is composed of two ATP-binding proteins (PhnC), two transmembrane proteins (PhnE) and a solute-binding protein (PhnD).

Its subcellular location is the cell inner membrane. The catalysed reaction is phosphonate(out) + ATP + H2O = phosphonate(in) + ADP + phosphate + H(+). In terms of biological role, part of the ABC transporter complex PhnCDE involved in phosphonates import. Responsible for energy coupling to the transport system. This Nostoc sp. (strain PCC 7120 / SAG 25.82 / UTEX 2576) protein is Phosphonates import ATP-binding protein PhnC 2.